Here is an 89-residue protein sequence, read N- to C-terminus: Small ribosomal subunit protein uS19 (89 aa).

The protein belongs to the universal ribosomal protein uS19 family.

Protein S19 forms a complex with S13 that binds strongly to the 16S ribosomal RNA. The chain is Small ribosomal subunit protein uS19 from Phocaeicola vulgatus (strain ATCC 8482 / DSM 1447 / JCM 5826 / CCUG 4940 / NBRC 14291 / NCTC 11154) (Bacteroides vulgatus).